Reading from the N-terminus, the 442-residue chain is C4-dicarboxylate transport protein 4 (442 aa).

The next 6 membrane-spanning stretches (helical) occupy residues 20-40, 53-73, 90-110, 160-180, 209-229, and 233-253; these read ILYVQVLIAIVLGVLIGYFYP, FIALIKMMIAPVIFCTVVHGI, LIYFESVSTVALAVGLLVGEV, GDLLQVLLISILSGFAIAFLG, PVGAFGAMAFTVGAYGLGSLL, and ALIGTFYLTSILFVLIVLGAI.

The protein belongs to the dicarboxylate/amino acid:cation symporter (DAACS) (TC 2.A.23) family.

The protein resides in the cell inner membrane. In terms of biological role, responsible for the transport of dicarboxylates such as succinate, fumarate, and malate from the periplasm across the membrane. The protein is C4-dicarboxylate transport protein 4 of Bradyrhizobium diazoefficiens (strain JCM 10833 / BCRC 13528 / IAM 13628 / NBRC 14792 / USDA 110).